Here is a 428-residue protein sequence, read N- to C-terminus: GTPase Obg (428 aa).

Positions 1–158 (MFVDQVKIYV…RYVTLELKLL (158 aa)) constitute an Obg domain. Residues 159–329 (ADVGLVGFPS…LLFAIADLLE (171 aa)) form the OBG-type G domain. GTP-binding positions include 165–172 (GFPSVGKS), 190–194 (FTTIV), 212–215 (DLPG), 282–285 (NKMD), and 310–312 (SAV). The Mg(2+) site is built by Ser172 and Thr192. The OCT domain occupies 350 to 428 (KLEKEEAPFH…LLNYEFEFVD (79 aa)).

It belongs to the TRAFAC class OBG-HflX-like GTPase superfamily. OBG GTPase family. As to quaternary structure, monomer. Requires Mg(2+) as cofactor.

It localises to the cytoplasm. An essential GTPase which binds GTP, GDP and possibly (p)ppGpp with moderate affinity, with high nucleotide exchange rates and a fairly low GTP hydrolysis rate. Plays a role in control of the cell cycle, stress response, ribosome biogenesis and in those bacteria that undergo differentiation, in morphogenesis control. The sequence is that of GTPase Obg from Anoxybacillus flavithermus (strain DSM 21510 / WK1).